A 513-amino-acid polypeptide reads, in one-letter code: ATP synthase subunit alpha (513 aa).

Residue 169–176 coordinates ATP; the sequence is GDRQTGKT.

This sequence belongs to the ATPase alpha/beta chains family. In terms of assembly, F-type ATPases have 2 components, CF(1) - the catalytic core - and CF(0) - the membrane proton channel. CF(1) has five subunits: alpha(3), beta(3), gamma(1), delta(1), epsilon(1). CF(0) has three main subunits: a(1), b(2) and c(9-12). The alpha and beta chains form an alternating ring which encloses part of the gamma chain. CF(1) is attached to CF(0) by a central stalk formed by the gamma and epsilon chains, while a peripheral stalk is formed by the delta and b chains.

The protein resides in the cell inner membrane. It catalyses the reaction ATP + H2O + 4 H(+)(in) = ADP + phosphate + 5 H(+)(out). Functionally, produces ATP from ADP in the presence of a proton gradient across the membrane. The alpha chain is a regulatory subunit. The protein is ATP synthase subunit alpha of Cupriavidus metallidurans (strain ATCC 43123 / DSM 2839 / NBRC 102507 / CH34) (Ralstonia metallidurans).